The sequence spans 418 residues: Ciliary microtubule-associated protein 2 (418 aa).

As to expression, sperm.

This is Ciliary microtubule-associated protein 2 from Homo sapiens (Human).